Reading from the N-terminus, the 772-residue chain is Elongin-A (772 aa).

One can recognise a TFIIS N-terminal domain in the interval 4–79 (ESALQVVEKL…AQWKKLVPVE (76 aa)). Basic and acidic residues-rich tracts occupy residues 79 to 105 (ERNAEPDEQDFEKSNSRKRPRDALQKE) and 136 to 156 (LSELERPHKVSHGHERRDERK). 2 disordered regions span residues 79 to 403 (ERNA…FEQP) and 418 to 466 (KKKK…EKPA). S196 carries the post-translational modification Phosphoserine. 5 stretches are compositionally biased toward basic and acidic residues: residues 226 to 235 (QERHLGEPHG), 253 to 269 (RPVDAKSDEKASVVSRE), 275 to 308 (LSKEENRRPPSGDNAREKPPSSGVKKEKDREGSS), 321 to 343 (SDNHLKKPKHRDPEKAKLDKSKQ), and 372 to 384 (PEGKVKTNLDRKS). 2 positions are modified to phosphoserine: S384 and S387. T394 is subject to Phosphothreonine. Residue K434 is modified to N6-acetyllysine. Residues 434–443 (KGLKKNDSKS) show a composition bias toward basic and acidic residues. Residue S516 is modified to Phosphoserine. Positions 522–681 (EAGFTGRRMN…PPRDVRRRQE (160 aa)) are activation domain. The segment at 550–559 (TLHQQCIRVL) is BC-box. The 45-residue stretch at 566 to 610 (IFEVGGVPYSVLEPVLERCTPDQLYRIEEYNHVLIEETDQLWKVH) folds into the F-box domain. Residues 674-732 (RDVRRRQEKFGTGGAAVPEKIKIKPAPYPMGSSHASASSISFNPSPEEPAYDGPSTSSA) are disordered. Low complexity predominate over residues 705-714 (SSHASASSIS).

Heterotrimer of an A (ELOA, ELOA2 or ELOA3P), ELOB and ELOC subunit. Part of a multisubunit ubiquitin ligase complex consisting of elongin BC complex (ELOB and ELOC), elongin A/ELOA, RBX1 and CUL5. Interacts with ERCC6; the interaction is induced by DNA damaging agents or inhibitors of RNA polymerase II elongation. Interacts (via BC-box) with CUL5.

It localises to the nucleus. Functionally, SIII, also known as elongin, is a general transcription elongation factor that increases the RNA polymerase II transcription elongation past template-encoded arresting sites. Subunit A is transcriptionally active and its transcription activity is strongly enhanced by binding to the dimeric complex of the SIII regulatory subunits B and C (elongin BC complex). As part of a multisubunit complex composed of elongin BC complex (ELOB and ELOC), elongin A/ELOA, RBX1 and CUL5; polyubiquitinates monoubiquitinated POLR2A. The protein is Elongin-A of Homo sapiens (Human).